The sequence spans 191 residues: Peptidyl-tRNA hydrolase (191 aa).

Tyrosine 15 provides a ligand contact to tRNA. Histidine 20 (proton acceptor) is an active-site residue. 3 residues coordinate tRNA: phenylalanine 66, asparagine 68, and asparagine 114.

Belongs to the PTH family. In terms of assembly, monomer.

The protein localises to the cytoplasm. It catalyses the reaction an N-acyl-L-alpha-aminoacyl-tRNA + H2O = an N-acyl-L-amino acid + a tRNA + H(+). Functionally, hydrolyzes ribosome-free peptidyl-tRNAs (with 1 or more amino acids incorporated), which drop off the ribosome during protein synthesis, or as a result of ribosome stalling. Its function is as follows. Catalyzes the release of premature peptidyl moieties from peptidyl-tRNA molecules trapped in stalled 50S ribosomal subunits, and thus maintains levels of free tRNAs and 50S ribosomes. This chain is Peptidyl-tRNA hydrolase, found in Streptococcus agalactiae serotype III (strain NEM316).